The primary structure comprises 1438 residues: MGARASVLTGGKLDRWEKIYLRPGGKKKYMMKHLVWASRELERFACNPSLMETTEGCKQLLQQLEPALKTGSEGLRSLFNTIVVLWCVHQGIPVKDTKEALDQLQEAQQKGKQEVAAATADGTSTVSRNFPIVANAQGQMVHQPISPRTLNAWVKVVEEKAFSPEVIPMFMALSEGATPQDLNTMLNTVGGHQAAMQMLKEVINEEAAEWDRLHPVHAGPVPPGQMREPRGSDIAGTTSTIQEQVGWMTSNPPIPVGDIYKRWIILGLNKIVKMYCPVSILDIKQGPKESFRDYVDRFYKTLRAEQATQEVKNWMTDTLLVQNANPDCKSILRALGPGATLEGDEPAFQGVGGPSHKARVLAEAMSQAQHSNDAKRQFKGPKRIVKCFNCGKEGHIARNCKAPRRKGCWKCGQEGHQMRNCTNERQANFFRETLAFQQGKAREFPSEETRTNSSTNRELRVQGGGTCPEGGSEERGDREQAVSSANFPQISLWQRPVVTVRIEGQLKEALLDTGADDTVLEEIELGGRWKPKMIGGIGGFIKVRQYDNVTIDICGKRAVGTVLVGPTPVNIIGRNILTQIGCTLNFPISPIETVPVSLKPGMDGPRVKQWPLTEEKIRALTEICTEMEKEGKISRVGPENPYNTPIFAIKKKDSTKWRKLVDFRELNKRTQDFWEVQLGIPHPAGLKQKKSVTVLDVGDAYFSCPLDENFRKYTAFTIPSVNNETPGIRYQYNVLPQGWKGSPAIFQSSMTKILEPFRKQNPEIIIYQYMDDLYVGSDLKIELHREKVEELRAHLLKWGFTTPDKKHQKEPPFLWMGYELHPDKWTVQPIQLPEKESWTVNDIQKLIGKLNWACQIYPGIRVKQLCKLIRGTKALTEVVTFTTEAELELAENREILKEPVHGAYYDPSKELIAEIQKQGQGQWTYQIFQEQYKNLKTGKYARMRSAHTNDVKQLTEVVQKVALESIVIWGKVPRFRLPIQKETWEAWWTDYWQATWIPEWEYVNTPPLVKLWYQLEQDPIPGAETFYVDGAANRETKLGKAGYVTDKGRQKIISLTETTNQKAELQAIQLALQDSEVEVNIVTDSQYALGIIQGQPDTSESEIVNQIIEELIKKEKVYLSWVPAHKGIGGNEQIDKLVSSGIRKVLFLDGIDKAQEEHEKYHNNWRAMASDFNLPPIVAKEIVANCDKCQLKGEAIHGQVDCSPGIWQLDCTHLEGKIILVAVHVASGYMEAEVIPAETGQETAYFILKLAGRWPVKVIHTDNGSNFTSSTVKAACWWAGIQQEFGIPYNPQSQGVVESMNKELKKIIGQIRDQAEHLKTAVQMAVFIHNFKRKGGIGGYSAGERIIDILATDIQTTKLQQQISNIQKFRVYYRDSRDPIWKGPAKLLWKGEGAVVLQDQEEIKVVPRRKAKIIRDYGKQMAGDDCVASRQDENQNME.

A lipid anchor (N-myristoyl glycine; by host) is attached at glycine 2. Positions 16–22 match the Nuclear export signal motif; the sequence is WEKIYLR. The Nuclear localization signal motif lies at 26–32; the sequence is KKKYMMK. 2 CCHC-type zinc fingers span residues 385-402 and 406-423; these read VKCF…NCKA and KGCW…NCTN. The interval 439-481 is disordered; sequence GKAREFPSEETRTNSSTNRELRVQGGGTCPEGGSEERGDREQA. Residues 440–450 show a composition bias toward basic and acidic residues; the sequence is KAREFPSEETR. Residues 507-576 form the Peptidase A2 domain; sequence KEALLDTGAD…TPVNIIGRNI (70 aa). The For protease activity; shared with dimeric partner role is filled by aspartate 512. One can recognise a Reverse transcriptase domain in the interval 630 to 820; it reads EGKISRVGPE…PPFLWMGYEL (191 aa). The Mg(2+) site is built by aspartate 696, aspartate 771, and aspartate 772. The interval 813–821 is RT 'primer grip'; that stretch reads FLWMGYELH. Residues 984-1000 carry the Tryptophan repeat motif motif; sequence WEAWWTDYWQATWIPEW. Positions 1020–1143 constitute an RNase H type-1 domain; it reads IPGAETFYVD…IDKLVSSGIR (124 aa). Mg(2+)-binding residues include aspartate 1029, glutamate 1064, aspartate 1084, and aspartate 1135. The segment at 1149–1190 adopts an Integrase-type zinc-finger fold; it reads DGIDKAQEEHEKYHNNWRAMASDFNLPPIVAKEIVANCDKCQ. Zn(2+)-binding residues include histidine 1158, histidine 1162, cysteine 1186, and cysteine 1189. In terms of domain architecture, Integrase catalytic spans 1200 to 1350; sequence VDCSPGIWQL…SAGERIIDIL (151 aa). Positions 1210 and 1262 each coordinate Mg(2+). A DNA-binding region (integrase-type) is located at residues 1369–1416; sequence FRVYYRDSRDPIWKGPAKLLWKGEGAVVLQDQEEIKVVPRRKAKIIRD.

Homotrimer. Interacts with gp41 (via C-terminus). In terms of assembly, homodimer. The active site consists of two apposed aspartic acid residues. As to quaternary structure, heterodimer of p66 RT and p51 RT (RT p66/p51). Heterodimerization of RT is essential for DNA polymerase activity. Despite the sequence identities, p66 RT and p51 RT have distinct folding. Homotetramer; may further associate as a homohexadecamer. Requires Mg(2+) as cofactor. In terms of processing, specific enzymatic cleavages by the viral protease yield mature proteins. The protease is released by autocatalytic cleavage. The polyprotein is cleaved during and after budding, this process is termed maturation. Proteolytic cleavage of p66 RT removes the RNase H domain to yield the p51 RT subunit. Post-translationally, capsid protein p24 is phosphorylated.

Its subcellular location is the virion. It localises to the host nucleus. The protein resides in the host cytoplasm. The protein localises to the host cell membrane. The enzyme catalyses Specific for a P1 residue that is hydrophobic, and P1' variable, but often Pro.. It carries out the reaction Endohydrolysis of RNA in RNA/DNA hybrids. Three different cleavage modes: 1. sequence-specific internal cleavage of RNA. Human immunodeficiency virus type 1 and Moloney murine leukemia virus enzymes prefer to cleave the RNA strand one nucleotide away from the RNA-DNA junction. 2. RNA 5'-end directed cleavage 13-19 nucleotides from the RNA end. 3. DNA 3'-end directed cleavage 15-20 nucleotides away from the primer terminus.. It catalyses the reaction 3'-end directed exonucleolytic cleavage of viral RNA-DNA hybrid.. The catalysed reaction is DNA(n) + a 2'-deoxyribonucleoside 5'-triphosphate = DNA(n+1) + diphosphate. With respect to regulation, the viral protease is inhibited by many synthetic protease inhibitors (PIs), such as amprenavir, atazanavir, indinavir, loprinavir, nelfinavir, ritonavir and saquinavir. RT can be inhibited either by nucleoside RT inhibitors (NRTIs) or by non nucleoside RT inhibitors (NNRTIs). NRTIs act as chain terminators, whereas NNRTIs inhibit DNA polymerization by binding a small hydrophobic pocket near the RT active site and inducing an allosteric change in this region. Classical NRTIs are abacavir, adefovir (PMEA), didanosine (ddI), lamivudine (3TC), stavudine (d4T), tenofovir (PMPA), zalcitabine (ddC), and zidovudine (AZT). Classical NNRTIs are atevirdine (BHAP U-87201E), delavirdine, efavirenz (DMP-266), emivirine (I-EBU), and nevirapine (BI-RG-587). The tritherapies used as a basic effective treatment of AIDS associate two NRTIs and one NNRTI. Use of protease inhibitors in tritherapy regimens permit more ambitious therapeutic strategies. Its function is as follows. Gag-Pol polyprotein and Gag polyprotein may regulate their own translation, by the binding genomic RNA in the 5'-UTR. At low concentration, Gag-Pol and Gag would promote translation, whereas at high concentration, the polyproteins encapsidate genomic RNA and then shut off translation. In terms of biological role, matrix protein p17 has two main functions: in infected cell, it targets Gag and Gag-pol polyproteins to the plasma membrane via a multipartite membrane-binding signal, that includes its myristointegration complex. The myristoylation signal and the NLS exert conflicting influences its subcellular localization. The key regulation of these motifs might be phosphorylation of a portion of MA molecules on the C-terminal tyrosine at the time of virus maturation, by virion-associated cellular tyrosine kinase. Implicated in the release from host cell mediated by Vpu. Capsid protein p24 forms the conical core that encapsulates the genomic RNA-nucleocapsid complex in the virion. The core is constituted by capsid protein hexamer subunits. The core is disassembled soon after virion entry. Interaction with host PPIA/CYPA protects the virus from restriction by host TRIM5-alpha and from an unknown antiviral activity in host cells. This capsid restriction by TRIM5 is one of the factors which restricts SIV to the simian species. Functionally, nucleocapsid protein p7 encapsulates and protects viral dimeric unspliced (genomic) RNA. Binds these RNAs through its zinc fingers. Facilitates rearangement of nucleic acid secondary structure during retrotranscription of genomic RNA. This capability is referred to as nucleic acid chaperone activity. Its function is as follows. The aspartyl protease mediates proteolytic cleavages of Gag and Gag-Pol polyproteins during or shortly after the release of the virion from the plasma membrane. Cleavages take place as an ordered, step-wise cascade to yield mature proteins. This process is called maturation. Displays maximal activity during the budding process just prior to particle release from the cell. Also cleaves Nef and Vif, probably concomitantly with viral structural proteins on maturation of virus particles. Hydrolyzes host EIF4GI and PABP1 in order to shut off the capped cellular mRNA translation. The resulting inhibition of cellular protein synthesis serves to ensure maximal viral gene expression and to evade host immune response. In terms of biological role, reverse transcriptase/ribonuclease H (RT) is a multifunctional enzyme that converts the viral dimeric RNA genome into dsDNA in the cytoplasm, shortly after virus entry into the cell. This enzyme displays a DNA polymerase activity that can copy either DNA or RNA templates, and a ribonuclease H (RNase H) activity that cleaves the RNA strand of RNA-DNA heteroduplexes in a partially processive 3' to 5' endonucleasic mode. Conversion of viral genomic RNA into dsDNA requires many steps. A tRNA binds to the primer-binding site (PBS) situated at the 5'-end of the viral RNA. RT uses the 3' end of the tRNA primer to perform a short round of RNA-dependent minus-strand DNA synthesis. The reading proceeds through the U5 region and ends after the repeated (R) region which is present at both ends of viral RNA. The portion of the RNA-DNA heteroduplex is digested by the RNase H, resulting in a ssDNA product attached to the tRNA primer. This ssDNA/tRNA hybridizes with the identical R region situated at the 3' end of viral RNA. This template exchange, known as minus-strand DNA strong stop transfer, can be either intra- or intermolecular. RT uses the 3' end of this newly synthesized short ssDNA to perform the RNA-dependent minus-strand DNA synthesis of the whole template. RNase H digests the RNA template except for two polypurine tracts (PPTs) situated at the 5'-end and near the center of the genome. It is not clear if both polymerase and RNase H activities are simultaneous. RNase H can probably proceed both in a polymerase-dependent (RNA cut into small fragments by the same RT performing DNA synthesis) and a polymerase-independent mode (cleavage of remaining RNA fragments by free RTs). Secondly, RT performs DNA-directed plus-strand DNA synthesis using the PPTs that have not been removed by RNase H as primers. PPTs and tRNA primers are then removed by RNase H. The 3' and 5' ssDNA PBS regions hybridize to form a circular dsDNA intermediate. Strand displacement synthesis by RT to the PBS and PPT ends produces a blunt ended, linear dsDNA copy of the viral genome that includes long terminal repeats (LTRs) at both ends. Integrase catalyzes viral DNA integration into the host chromosome, by performing a series of DNA cutting and joining reactions. This enzyme activity takes place after virion entry into a cell and reverse transcription of the RNA genome in dsDNA. The first step in the integration process is 3' processing. This step requires a complex comprising the viral genome, matrix protein, Vpr and integrase. This complex is called the pre-integration complex (PIC). The integrase protein removes 2 nucleotides from each 3' end of the viral DNA, leaving recessed CA OH's at the 3' ends. In the second step, the PIC enters cell nucleus. This process is mediated through integrase and Vpr proteins, and allows the virus to infect a non dividing cell. This ability to enter the nucleus is specific of lentiviruses, other retroviruses cannot and rely on cell division to access cell chromosomes. In the third step, termed strand transfer, the integrase protein joins the previously processed 3' ends to the 5' ends of strands of target cellular DNA at the site of integration. The 5'-ends are produced by integrase-catalyzed staggered cuts, 5 bp apart. A Y-shaped, gapped, recombination intermediate results, with the 5'-ends of the viral DNA strands and the 3' ends of target DNA strands remaining unjoined, flanking a gap of 5 bp. The last step is viral DNA integration into host chromosome. This involves host DNA repair synthesis in which the 5 bp gaps between the unjoined strands are filled in and then ligated. Since this process occurs at both cuts flanking the SIV genome, a 5 bp duplication of host DNA is produced at the ends of SIV integration. Alternatively, Integrase may catalyze the excision of viral DNA just after strand transfer, this is termed disintegration. The polypeptide is Gag-Pol polyprotein (gag-pol) (Pan troglodytes (Chimpanzee)).